A 352-amino-acid chain; its full sequence is SKP1-like protein 20 (352 aa).

The tract at residues 108–167 (TSAADSLQLKPLVDLTSRALARIIEGKNPEEIREIFHLPDDLTEEEKLEPLKNSMDDPRI) is interaction with the F-box domain of F-box proteins. Disordered stretches follow at residues 214–251 (KAVKMSKGKKKKKKKKDQKIVSSNNIHDKESHDLRSKQ) and 267–288 (LLSAEDDISTPNAGSEDEDIDD). Basic residues predominate over residues 216–230 (VKMSKGKKKKKKKKD). A compositionally biased stretch (basic and acidic residues) spans 239 to 249 (IHDKESHDLRS).

This sequence belongs to the SKP1 family. As to quaternary structure, part of a SCF (SKP1-cullin-F-box) protein ligase complex. As to expression, expressed in young seedlings, roots, leaves, floral stems, inflorescences, and siliques.

The protein resides in the nucleus. It participates in protein modification; protein ubiquitination. In terms of biological role, involved in ubiquitination and subsequent proteasomal degradation of target proteins. Together with CUL1, RBX1 and a F-box protein, it forms a SCF E3 ubiquitin ligase complex. The functional specificity of this complex depends on the type of F-box protein. In the SCF complex, it serves as an adapter that links the F-box protein to CUL1. The protein is SKP1-like protein 20 (ASK20) of Arabidopsis thaliana (Mouse-ear cress).